The chain runs to 638 residues: MLDFFTIFSKGGLVLWCFQGVSDSCTGPVNALIRSVLLQERGGNNSFTHEALTLKYKLDNQFELVFVVGFQKILTLTYVDKLIDDVHRLFRDKYRTEIQQQSALSLLNGTFDFQNDFLRLLREAEESSKIRAPTTMKKFEDSEKAKKPVRSMIETRGEKPKEKAKNSKKKGAKKEGSDGPLATSKPVPAEKSGLPVGPENGVELSKEELIRRKREEFIQKHGRGMEKSNKSTKSDAPKEKGKKAPRVWELGGCANKEVLDYSTPTTNGTPEAALSEDINLIRGTGSGGQLQDLDCSSSDDEGAAQNSTKPSATKGTLGGMFGMLKGLVGSKSLSREDMESVLDKMRDHLIAKNVAADIAVQLCESVANKLEGKVMGTFSTVTSTVKQALQESLVQILQPQRRVDMLRDIMDAQRRQRPYVVTFCGVNGVGKSTNLAKISFWLLENGFSVLIAACDTFRAGAVEQLRTHTRRLSALHPPEKHGGRTMVQLFEKGYGKDAAGIAMEAIAFARNQGFDVVLVDTAGRMQDNAPLMTALAKLITVNTPDLVLFVGEALVGNEAVDQLVKFNRALADHSMAQTPRLIDGIVLTKFDTIDDKVGAAISMTYITSKPIVFVGTGQTYCDLRSLNAKAVVAALMKA.

Disordered stretches follow at residues 132-244 (APTT…GKKA) and 283-316 (GTGSGGQLQDLDCSSSDDEGAAQNSTKPSATKGT). Composition is skewed to basic and acidic residues over residues 137 to 146 (KKFEDSEKAK) and 153 to 165 (IETRGEKPKEKAK). S177 carries the phosphoserine modification. A compositionally biased stretch (basic and acidic residues) spans 204–239 (LSKEELIRRKREEFIQKHGRGMEKSNKSTKSDAPKE). T284 carries the phosphothreonine modification. A phosphoserine mark is found at S296, S297, and S298. Polar residues predominate over residues 304-314 (AQNSTKPSATK). The interval 419 to 636 (YVVTFCGVNG…NAKAVVAALM (218 aa)) is NG domain. 425–432 (GVNGVGKS) contributes to the GTP binding site. Position 473 is a phosphoserine (S473). 520 to 524 (DTAGR) is a binding site for GTP. T578 carries the post-translational modification Phosphothreonine. 588–591 (TKFD) is a binding site for GTP.

Belongs to the GTP-binding SRP family. Heterodimer with SRPRB. Interacts with the signal recognition particle (SRP) complex subunit SRP54. In terms of assembly, (Microbial infection) May interact with Zika virus strain Mr-766 non-structural protein 4A/NS4A. May interact with Zika virus French Polynesia 10087PF/2013 non-structural protein 4A/NS4A. As to quaternary structure, (Microbial infection) May interact with Dengue virus DENV2 16681 non-structural protein 4A/NS4A.

It localises to the endoplasmic reticulum membrane. Component of the signal recognition particle (SRP) complex receptor (SR). Ensures, in conjunction with the SRP complex, the correct targeting of the nascent secretory proteins to the endoplasmic reticulum membrane system. Forms a guanosine 5'-triphosphate (GTP)-dependent complex with the SRP subunit SRP54. SRP receptor compaction and GTPase rearrangement drive SRP-mediated cotranslational protein translocation into the ER. This Homo sapiens (Human) protein is Signal recognition particle receptor subunit alpha.